Here is a 1620-residue protein sequence, read N- to C-terminus: Myb-like protein X (1620 aa).

A compositionally biased stretch (polar residues) spans 1–13 (MSTIGNNASSIGN). Disordered regions lie at residues 1–57 (MSTI…TTTT), 176–204 (TGSG…SNIG), 294–318 (FFQD…NMTE), and 450–849 (KEEK…TKSA). The segment covering 28-57 (PPTTTTTTTTTTTTTTTTPTTTTPTTTTTT) has biased composition (low complexity). The span at 177 to 187 (GSGGIGGGGSG) shows a compositional bias: gly residues. Residues 310 to 421 (GSGSNNMTEI…CFVNSGDYMN (112 aa)) enclose the SWIRM domain. The segment covering 450-497 (KEEKERLEREEKERLEREEKQEKEEKERLEKEEKERLEREEKQEKEEK) has biased composition (basic and acidic residues). The segment covering 498–511 (EEKEEKEENEEKEE) has biased composition (acidic residues). Positions 512–568 (KEEKEKEEKEEKEKQEKEDDKEKQENENEQEKIEKKENKNDSQNKEIKENHDKKDET) are enriched in basic and acidic residues. The segment covering 570–598 (DSNNTTTTTTTTTTTSTNTLVAESSSSSS) has biased composition (low complexity). Over residues 606-628 (KEMKEQPVQENKDKEMMETDTTK) the composition is skewed to basic and acidic residues. The segment covering 629 to 645 (ENNGVETTETTNQTTDS) has biased composition (low complexity). A compositionally biased stretch (basic and acidic residues) spans 647-798 (ETDKEMKDQP…EIKKDKLKEN (152 aa)). The segment covering 799–834 (EEVEGEIEGENDEGEVVEEDEDEEMEIEEDEEDEED) has biased composition (acidic residues). Residues 925 to 977 (PEEFGWTDIETLLLLEGIEIFRDNWQEISDYIGGSKTPEQCLTHFIRLPIEDE) form the SANT domain. Residues 1049-1506 (QPSKEELERI…DDDEDVEMET (458 aa)) are disordered. 3 stretches are compositionally biased toward basic and acidic residues: residues 1051 to 1195 (SKEE…DKSD), 1219 to 1255 (ETVE…KDDN), and 1264 to 1302 (HNKE…EKDL). Positions 1303-1325 (NNLSESQSSNDQSKSNEQMSSDN) are enriched in low complexity. The segment covering 1338–1350 (TQITSKEQNITTD) has biased composition (polar residues). Composition is skewed to low complexity over residues 1358 to 1382 (TPTT…TTNT) and 1390 to 1416 (NETN…ESNN). 2 stretches are compositionally biased toward acidic residues: residues 1467 to 1481 (EENE…ENDL) and 1493 to 1504 (VGEEDDDEDVEM).

Its subcellular location is the nucleus. The protein is Myb-like protein X (mybX) of Dictyostelium discoideum (Social amoeba).